We begin with the raw amino-acid sequence, 272 residues long: 3-methyl-2-oxobutanoate hydroxymethyltransferase (272 aa).

Mg(2+)-binding residues include Asp-43 and Asp-82. 3-methyl-2-oxobutanoate contacts are provided by residues 43-44, Asp-82, and Lys-112; that span reads DS. Glu-114 contributes to the Mg(2+) binding site. Glu-179 acts as the Proton acceptor in catalysis.

It belongs to the PanB family. Homodecamer; pentamer of dimers. Requires Mg(2+) as cofactor.

It is found in the cytoplasm. The catalysed reaction is 3-methyl-2-oxobutanoate + (6R)-5,10-methylene-5,6,7,8-tetrahydrofolate + H2O = 2-dehydropantoate + (6S)-5,6,7,8-tetrahydrofolate. It participates in cofactor biosynthesis; (R)-pantothenate biosynthesis; (R)-pantoate from 3-methyl-2-oxobutanoate: step 1/2. In terms of biological role, catalyzes the reversible reaction in which hydroxymethyl group from 5,10-methylenetetrahydrofolate is transferred onto alpha-ketoisovalerate to form ketopantoate. This Staphylococcus aureus (strain MRSA252) protein is 3-methyl-2-oxobutanoate hydroxymethyltransferase.